The chain runs to 355 residues: Peptide chain release factor 1 (355 aa).

Residue Q229 is modified to N5-methylglutamine. The tract at residues 280–299 (LDRERSAARKGQVGSGDRSE) is disordered.

This sequence belongs to the prokaryotic/mitochondrial release factor family. Post-translationally, methylated by PrmC. Methylation increases the termination efficiency of RF1.

Its subcellular location is the cytoplasm. In terms of biological role, peptide chain release factor 1 directs the termination of translation in response to the peptide chain termination codons UAG and UAA. In Parvibaculum lavamentivorans (strain DS-1 / DSM 13023 / NCIMB 13966), this protein is Peptide chain release factor 1.